The primary structure comprises 155 residues: Ribosomal RNA large subunit methyltransferase H (155 aa).

S-adenosyl-L-methionine is bound by residues Leu-72, Gly-104, and 123-128 (LAKITL).

This sequence belongs to the RNA methyltransferase RlmH family. As to quaternary structure, homodimer.

The protein localises to the cytoplasm. It catalyses the reaction pseudouridine(1915) in 23S rRNA + S-adenosyl-L-methionine = N(3)-methylpseudouridine(1915) in 23S rRNA + S-adenosyl-L-homocysteine + H(+). Its function is as follows. Specifically methylates the pseudouridine at position 1915 (m3Psi1915) in 23S rRNA. This Mycoplasma mycoides subsp. mycoides SC (strain CCUG 32753 / NCTC 10114 / PG1) protein is Ribosomal RNA large subunit methyltransferase H.